A 196-amino-acid polypeptide reads, in one-letter code: Ribosome maturation factor RimP (196 aa).

The tract at residues Gly-163–Glu-196 is disordered.

The protein belongs to the RimP family.

Its subcellular location is the cytoplasm. Its function is as follows. Required for maturation of 30S ribosomal subunits. The chain is Ribosome maturation factor RimP from Stenotrophomonas maltophilia (strain R551-3).